The sequence spans 350 residues: Probable peptidyl-alpha-hydroxyglycine alpha-amidating lyase pgal-1 (350 aa).

The first 19 residues, 1–19, serve as a signal peptide directing secretion; the sequence is MRASTACLVALLAPFYISA. The NHL 1 repeat unit spans residues 46–90; the sequence is DRELIGLFNPSKEIGQVSGLAVNKNGHIVAFHRSGRVWDEKSFND. Residue Asn103 is glycosylated (N-linked (GlcNAc...) asparagine). 3 NHL repeats span residues 113-154, 162-206, and 212-256; these read KKVI…IDAK, LGEK…FDAK, and QINA…FSAG. 2 disulfides stabilise this stretch: Cys176–Cys196 and Cys241–Cys252.

Belongs to the peptidyl-alpha-hydroxyglycine alpha-amidating lyase family. Requires Zn(2+) as cofactor.

The protein localises to the secreted. The catalysed reaction is a [peptide]-C-terminal (2S)-2-hydroxyglycine = a [peptide]-C-terminal amide + glyoxylate. In terms of biological role, probable lyase that catalyzes an essential reaction in C-terminal alpha-amidation of peptides. Mediates the dismutation of the unstable peptidyl(2-hydroxyglycine) intermediate to glyoxylate and the corresponding desglycine peptide amide. C-terminal amidation of peptides such as neuropeptides is essential for full biological activity. This Caenorhabditis elegans protein is Probable peptidyl-alpha-hydroxyglycine alpha-amidating lyase pgal-1.